Reading from the N-terminus, the 117-residue chain is Ribonuclease P protein component (117 aa).

Belongs to the RnpA family. In terms of assembly, consists of a catalytic RNA component (M1 or rnpB) and a protein subunit.

It catalyses the reaction Endonucleolytic cleavage of RNA, removing 5'-extranucleotides from tRNA precursor.. RNaseP catalyzes the removal of the 5'-leader sequence from pre-tRNA to produce the mature 5'-terminus. It can also cleave other RNA substrates such as 4.5S RNA. The protein component plays an auxiliary but essential role in vivo by binding to the 5'-leader sequence and broadening the substrate specificity of the ribozyme. The sequence is that of Ribonuclease P protein component from Desulforapulum autotrophicum (strain ATCC 43914 / DSM 3382 / VKM B-1955 / HRM2) (Desulfobacterium autotrophicum).